Here is a 395-residue protein sequence, read N- to C-terminus: Putative carbonic anhydrase 1 (395 aa).

The first 24 residues, 1-24 (MKLQGAGCVVAAVLGALFIVNVES), serve as a signal peptide directing secretion. The region spanning 42–365 (ISYDVRSTIG…LNDRPVFLVR (324 aa)) is the Alpha-carbonic anhydrase domain. The Zn(2+) site is built by His139, His141, and His165.

Belongs to the alpha-carbonic anhydrase family. Zn(2+) is required as a cofactor. As to expression, component of the acid-insoluble and acid-soluble organic matrix of calcified layers of the shell (at protein level).

The protein resides in the secreted. It carries out the reaction hydrogencarbonate + H(+) = CO2 + H2O. Its function is as follows. Reversible hydration of carbon dioxide. This chain is Putative carbonic anhydrase 1, found in Lottia gigantea (Giant owl limpet).